Here is a 192-residue protein sequence, read N- to C-terminus: ATP synthase subunit b 2 (192 aa).

Residues 39-59 (SGFLAQLIWLALAFGLLYYLM) traverse the membrane as a helical segment.

It belongs to the ATPase B chain family. F-type ATPases have 2 components, F(1) - the catalytic core - and F(0) - the membrane proton channel. F(1) has five subunits: alpha(3), beta(3), gamma(1), delta(1), epsilon(1). F(0) has three main subunits: a(1), b(2) and c(10-14). The alpha and beta chains form an alternating ring which encloses part of the gamma chain. F(1) is attached to F(0) by a central stalk formed by the gamma and epsilon chains, while a peripheral stalk is formed by the delta and b chains.

The protein localises to the cell inner membrane. Its function is as follows. F(1)F(0) ATP synthase produces ATP from ADP in the presence of a proton or sodium gradient. F-type ATPases consist of two structural domains, F(1) containing the extramembraneous catalytic core and F(0) containing the membrane proton channel, linked together by a central stalk and a peripheral stalk. During catalysis, ATP synthesis in the catalytic domain of F(1) is coupled via a rotary mechanism of the central stalk subunits to proton translocation. Functionally, component of the F(0) channel, it forms part of the peripheral stalk, linking F(1) to F(0). The b'-subunit is a diverged and duplicated form of b found in plants and photosynthetic bacteria. The polypeptide is ATP synthase subunit b 2 (atpF2) (Methylobacterium radiotolerans (strain ATCC 27329 / DSM 1819 / JCM 2831 / NBRC 15690 / NCIMB 10815 / 0-1)).